Consider the following 212-residue polypeptide: Photosynthetic NDH subunit of subcomplex B 5, chloroplastic (212 aa).

The N-terminal 48 residues, 1–48, are a transit peptide targeting the chloroplast; that stretch reads MATVTILSPKSIPKVTDSKFGARVSDQIVNVVKCGKSGRRLKLAKLVS. The next 2 membrane-spanning stretches (helical) occupy residues 115 to 135 and 136 to 156; these read FQGL…YFDA and PGEY…IIEM.

Part of the chloroplast NDH complex, composed of a mixture of chloroplast and nucleus encoded subunits. Component of the NDH subcomplex B, at least composed of PnsB1, PnsB2, PnsB3, PnsB4 and PnsB5.

Its subcellular location is the plastid. The protein localises to the chloroplast membrane. In terms of biological role, NDH shuttles electrons from NAD(P)H:plastoquinone, via FMN and iron-sulfur (Fe-S) centers, to quinones in the photosynthetic chain and possibly in a chloroplast respiratory chain. The immediate electron acceptor for the enzyme in this species is believed to be plastoquinone. Couples the redox reaction to proton translocation, and thus conserves the redox energy in a proton gradient. The protein is Photosynthetic NDH subunit of subcomplex B 5, chloroplastic of Arabidopsis thaliana (Mouse-ear cress).